Here is a 360-residue protein sequence, read N- to C-terminus: NAD(P)H-quinone oxidoreductase subunit 1, chloroplastic (360 aa).

Helical transmembrane passes span 27–47 (IWIFVPIFSLILGIITGVLVI), 98–118 (FSIGPSIAVISILLSYSVIPF), 129–149 (IGIFLWIAISSIAPIGLLMSG), 165–185 (AAQSISYEIPLTLCVLSISLL), 203–223 (FWGWNLWRQPIGFIIFLISSL), 248–268 (YSGIKFGLFYVASYLNLLISS), 269–289 (LFVTVLYLGGWNISIPYISIL), 297–317 (IFGTTIGIFITLAKTYLFLFI), and 340–360 (FLLPISLGNLLLTTSFQLFSL).

It belongs to the complex I subunit 1 family. As to quaternary structure, NDH is composed of at least 16 different subunits, 5 of which are encoded in the nucleus.

It is found in the plastid. The protein resides in the chloroplast thylakoid membrane. It carries out the reaction a plastoquinone + NADH + (n+1) H(+)(in) = a plastoquinol + NAD(+) + n H(+)(out). It catalyses the reaction a plastoquinone + NADPH + (n+1) H(+)(in) = a plastoquinol + NADP(+) + n H(+)(out). NDH shuttles electrons from NAD(P)H:plastoquinone, via FMN and iron-sulfur (Fe-S) centers, to quinones in the photosynthetic chain and possibly in a chloroplast respiratory chain. The immediate electron acceptor for the enzyme in this species is believed to be plastoquinone. Couples the redox reaction to proton translocation, and thus conserves the redox energy in a proton gradient. This chain is NAD(P)H-quinone oxidoreductase subunit 1, chloroplastic, found in Barbarea verna (Land cress).